The sequence spans 144 residues: Small ribosomal subunit protein bS16 (144 aa).

The disordered stretch occupies residues 115 to 144 (NEPVAEAVTPKKKAKKDDAAAESTEAEAAE).

This sequence belongs to the bacterial ribosomal protein bS16 family.

The protein is Small ribosomal subunit protein bS16 of Nocardia farcinica (strain IFM 10152).